A 548-amino-acid chain; its full sequence is Probable malate:quinone oxidoreductase (548 aa).

A disordered region spans residues D521–L548. Residues P530–K541 show a composition bias toward low complexity.

Belongs to the MQO family. It depends on FAD as a cofactor.

The catalysed reaction is (S)-malate + a quinone = a quinol + oxaloacetate. The protein operates within carbohydrate metabolism; tricarboxylic acid cycle; oxaloacetate from (S)-malate (quinone route): step 1/1. This is Probable malate:quinone oxidoreductase from Escherichia coli (strain UTI89 / UPEC).